Consider the following 68-residue polypeptide: Large ribosomal subunit protein bL35 (68 aa).

This sequence belongs to the bacterial ribosomal protein bL35 family.

The sequence is that of Large ribosomal subunit protein bL35 from Rickettsia felis (strain ATCC VR-1525 / URRWXCal2) (Rickettsia azadi).